A 287-amino-acid chain; its full sequence is Probable WRKY transcription factor 57 (287 aa).

A compositionally biased stretch (low complexity) spans 86–99 (TSTNNNPSATSSSS). The tract at residues 86 to 137 (TSTNNNPSATSSSSEDPAENSTASAEKTPPPETPVKEKKKAQKRIRQPRFAF) is disordered. Basic residues predominate over residues 122 to 132 (EKKKAQKRIRQ). Residues 141–206 (SDVDNLEDGY…YEGQHCHQTI (66 aa)) constitute a DNA-binding region (WRKY). Residues 248–287 (DNNAPSPRLPRPTTEDTPAVSTPSEEGLLGDIVPQTMRNP) are disordered. Polar residues predominate over residues 262–271 (EDTPAVSTPS).

The protein belongs to the WRKY group II-c family.

It is found in the nucleus. Its function is as follows. Transcription factor. Interacts specifically with the W box (5'-(T)TGAC[CT]-3'), a frequently occurring elicitor-responsive cis-acting element. This chain is Probable WRKY transcription factor 57 (WRKY57), found in Arabidopsis thaliana (Mouse-ear cress).